Reading from the N-terminus, the 264-residue chain is MFDIGVNLTSSQFRSDREQVVARARQAGVTGLLLTGTSVEESEQACLLAAQYPDYCGSTAGVHPHDASGWNDDTADLIHQLAGREQVLAIGECGLDFNRNFSTPQEQEQAFSAQLAIAAERAMPVFLHCRDAHARFMALLTPWLDKLPAAVLHCFTGSGDELDDSLRAGLMIGITGWVCDERRGLALRALLPRIPDDRLLLETDAPYLLPRDLHPKPASRRNEPCFLPHIVRQVAAWRGQDAEWLGRNVDENARRIFRPGQRGE.

The a divalent metal cation site is built by E92, H128, and H153.

It belongs to the metallo-dependent hydrolases superfamily. TatD-type hydrolase family. TatD subfamily. In terms of assembly, monomer. Mg(2+) serves as cofactor.

It localises to the cytoplasm. 3'-5' exonuclease that prefers single-stranded DNA and RNA. May play a role in the H(2)O(2)-induced DNA damage repair. The sequence is that of 3'-5' ssDNA/RNA exonuclease TatD from Dickeya dadantii (strain 3937) (Erwinia chrysanthemi (strain 3937)).